The following is a 504-amino-acid chain: Probable cytosol aminopeptidase (504 aa).

The Mn(2+) site is built by Lys-274 and Asp-279. Lys-286 is an active-site residue. Mn(2+)-binding residues include Asp-297, Asp-356, and Glu-358. Arg-360 is a catalytic residue.

It belongs to the peptidase M17 family. The cofactor is Mn(2+).

It is found in the cytoplasm. It carries out the reaction Release of an N-terminal amino acid, Xaa-|-Yaa-, in which Xaa is preferably Leu, but may be other amino acids including Pro although not Arg or Lys, and Yaa may be Pro. Amino acid amides and methyl esters are also readily hydrolyzed, but rates on arylamides are exceedingly low.. It catalyses the reaction Release of an N-terminal amino acid, preferentially leucine, but not glutamic or aspartic acids.. In terms of biological role, presumably involved in the processing and regular turnover of intracellular proteins. Catalyzes the removal of unsubstituted N-terminal amino acids from various peptides. This chain is Probable cytosol aminopeptidase, found in Gloeobacter violaceus (strain ATCC 29082 / PCC 7421).